Here is an 874-residue protein sequence, read N- to C-terminus: MLKKFDKKDEESGGGSNPFQHLEKSAVLQEARVFNETPINPRKCAHILTKILYLINQGEHLGTTEATEAFFAMTKLFQSNDPTLRRMCYLTIKEMSCIAEDVIIVTSSLTKDMTGKEDSYRGPAVRALCQITDSTMLQAIERYMKQAIVDKVPSVSSSALVSSLHLLKCSFDVVKRWVNEAQEAASSDNIMVQYHALGLLYHVRKNDRLAVSKMISKFTRHGLKSPFAYCMMIRVASRQLEDEDGSRDSPLFDFIESCLRNKHEMVVYEAASAIVNLPGCSAKELAPAVSVLQLFCSSPKAALRYAAVRTLNKVAMKHPSAVTACNLDLENLVTDANRSIATLAITTLLKTGSEGSIDRLMKQISSFMSEISDEFKVVVVQAISALCQKYPRKHAVLMNFLFSMLREEGGFEYKRAIVDCIISIIEENAESKETGLSHLCEFIEDCEFTVLATRILHLLGQEGPRTSNPSKYIRFIYNRVVLEHAEVRAGAVSALAKFGAQNEEMLPSILVLLKRCVMDDDNEVRDRATFYLNVLEQKQKALNAGYILNGLAVSIPGLERALQQYTLEPSEKPFDLKSVPLATAPLAEQRTESTPVTAAKQPEKVAATRQEIFQEQLAAVPEFQGLGPLFKSSPEPVALTESETEYVIRCTKHTFTDHMVFQFDCTNTLNDQTLENVTVQMEPSEAYEVLCYVPARSLPYNQPGTCYTLVALPKEDPTAVACTFSCVMKFTVKDCDPTTGEADDEGYEDEYVLEDLEVTIADHIQKVMKLNFEAAWDEVGDEFQKEETFTLSTIKTLEEAVGNIVKFLGMHPCERSDKVPDNKNTHTLLLAGVFRGGHDILVRSRLLLLDTVTMQVTARSSEELPVDIVLASVG.

The span at 1–11 (MLKKFDKKDEE) shows a compositional bias: basic and acidic residues. Residues 1–21 (MLKKFDKKDEESGGGSNPFQH) are disordered. HEAT repeat units follow at residues 64 to 101 (TEAT…IAED), 283 to 320 (KELA…KHPS), 322 to 355 (VTAC…GSEG), and 356 to 392 (SIDR…KYPR). A Phosphothreonine modification is found at Thr594. Residues 609-874 (RQEIFQEQLA…PVDIVLASVG (266 aa)) are interaction with ZNF289/ARFGAP2.

It belongs to the COPG family. In terms of assembly, oligomeric complex that consists of at least the alpha, beta, beta', gamma, delta, epsilon and zeta subunits. Interacts with ZNF289/ARFGAP2 through its C-terminal appendage domain. Interacts with EGFR upon EGF treatment; interaction is essential for regulation of EGF-dependent nuclear transport of EGFR by retrograde trafficking from the Golgi to the ER. The coatomer interacts with KDEL receptors; the interaction is important for retrograde trafficking of KDEL-bearing proteins from the Golgi to the endoplasmic reticulum. Interacts with COPB1. Interacts with TMED10 (via C-terminus). Interacts with TMED2, TMED3, TMED7 and TMED9.

It localises to the cytoplasm. Its subcellular location is the cytosol. The protein localises to the golgi apparatus membrane. The protein resides in the cytoplasmic vesicle. It is found in the COPI-coated vesicle membrane. The coatomer is a cytosolic protein complex that binds to dilysine motifs and reversibly associates with Golgi non-clathrin-coated vesicles, which further mediate biosynthetic protein transport from the ER, via the Golgi up to the trans Golgi network. Coatomer complex is required for budding from Golgi membranes, and is essential for the retrograde Golgi-to-ER transport of dilysine-tagged proteins. In mammals, the coatomer can only be recruited by membranes associated to ADP-ribosylation factors (ARFs), which are small GTP-binding proteins; the complex also influences the Golgi structural integrity, as well as the processing, activity, and endocytic recycling of LDL receptors. Required for limiting lipid storage in lipid droplets. Involved in lipid homeostasis by regulating the presence of perilipin family members PLIN2 and PLIN3 at the lipid droplet surface and promoting the association of adipocyte triglyceride lipase (PNPLA2) with the lipid droplet surface to mediate lipolysis. The protein is Coatomer subunit gamma-1 (COPG1) of Bos taurus (Bovine).